The sequence spans 222 residues: NAD(P)H-hydrate epimerase (222 aa).

In terms of domain architecture, YjeF N-terminal spans 9 to 209 (MQQIDSYTIE…DIGLRLPEDF (201 aa)). 57 to 61 (NNGAD) is a binding site for (6S)-NADPHX. Residues asparagine 58 and aspartate 119 each contribute to the K(+) site. (6S)-NADPHX contacts are provided by residues 123–129 (GVGLNNT) and aspartate 152. Threonine 155 is a binding site for K(+).

This sequence belongs to the NnrE/AIBP family. The cofactor is K(+).

It catalyses the reaction (6R)-NADHX = (6S)-NADHX. The enzyme catalyses (6R)-NADPHX = (6S)-NADPHX. Its function is as follows. Catalyzes the epimerization of the S- and R-forms of NAD(P)HX, a damaged form of NAD(P)H that is a result of enzymatic or heat-dependent hydration. This is a prerequisite for the S-specific NAD(P)H-hydrate dehydratase to allow the repair of both epimers of NAD(P)HX. This Leuconostoc citreum (strain KM20) protein is NAD(P)H-hydrate epimerase.